We begin with the raw amino-acid sequence, 516 residues long: Signal recognition particle protein (516 aa).

Residues 108-115 (GLQGAGKT), 191-195 (DTAGR), and 249-252 (TKID) each bind GTP. Positions 383–405 (MTPEERENPDLLTPSRRRRIASG) are disordered.

This sequence belongs to the GTP-binding SRP family. SRP54 subfamily. Part of the signal recognition particle protein translocation system, which is composed of SRP and FtsY.

The protein localises to the cytoplasm. The catalysed reaction is GTP + H2O = GDP + phosphate + H(+). Its function is as follows. Involved in targeting and insertion of nascent membrane proteins into the cytoplasmic membrane. Binds to the hydrophobic signal sequence of the ribosome-nascent chain (RNC) as it emerges from the ribosomes. The SRP-RNC complex is then targeted to the cytoplasmic membrane where it interacts with the SRP receptor FtsY. In Streptococcus mutans serotype c (strain ATCC 700610 / UA159), this protein is Signal recognition particle protein.